Consider the following 392-residue polypeptide: 5-amino-6-(D-ribitylamino)uracil--L-tyrosine 4-hydroxyphenyl transferase (392 aa).

Residues 60–307 (VTYVVNRNIN…MAIARLYLGK (248 aa)) form the Radical SAM core domain. 3 residues coordinate [4Fe-4S] cluster: cysteine 74, cysteine 78, and cysteine 81.

It belongs to the radical SAM superfamily. CofH family. As to quaternary structure, consists of two subunits, CofG and CofH. It depends on [4Fe-4S] cluster as a cofactor.

It carries out the reaction 5-amino-6-(D-ribitylamino)uracil + L-tyrosine + S-adenosyl-L-methionine = 5-amino-5-(4-hydroxybenzyl)-6-(D-ribitylimino)-5,6-dihydrouracil + 2-iminoacetate + 5'-deoxyadenosine + L-methionine + H(+). The protein operates within cofactor biosynthesis; coenzyme F0 biosynthesis. In terms of biological role, catalyzes the radical-mediated synthesis of 5-amino-5-(4-hydroxybenzyl)-6-(D-ribitylimino)-5,6-dihydrouracil from 5-amino-6-(D-ribitylamino)uracil and L-tyrosine. The protein is 5-amino-6-(D-ribitylamino)uracil--L-tyrosine 4-hydroxyphenyl transferase of Synechocystis sp. (strain ATCC 27184 / PCC 6803 / Kazusa).